Here is a 218-residue protein sequence, read N- to C-terminus: Adenylate kinase (218 aa).

10 to 15 (GAGKGT) is an ATP binding site. Residues 30-59 (STGDMLRAAVKAGTPLGLEAKAIMDAGGLV) are NMP. Residues T31, R36, 57–59 (GLV), 85–88 (GFPR), and Q92 contribute to the AMP site. The LID stretch occupies residues 122–159 (GRRVHLASGRTYHVTFNPPKAAGKDDVTGEDLVQRDDD). ATP-binding positions include R123 and 132–133 (TY). The AMP site is built by R156 and R167. Residue R203 participates in ATP binding.

Belongs to the adenylate kinase family. As to quaternary structure, monomer.

It is found in the cytoplasm. It carries out the reaction AMP + ATP = 2 ADP. The protein operates within purine metabolism; AMP biosynthesis via salvage pathway; AMP from ADP: step 1/1. In terms of biological role, catalyzes the reversible transfer of the terminal phosphate group between ATP and AMP. Plays an important role in cellular energy homeostasis and in adenine nucleotide metabolism. This Chromobacterium violaceum (strain ATCC 12472 / DSM 30191 / JCM 1249 / CCUG 213 / NBRC 12614 / NCIMB 9131 / NCTC 9757 / MK) protein is Adenylate kinase.